Consider the following 263-residue polypeptide: MHLNNLNNFNNLENNGEYHCSGPIIKKPFRHIALTVPSSDITNFNEIFYVEPQYIAQAIRLTNTFQGAIDPLTLNFNFEKALQIANGLPNAGVTGTINQSVIHQTIEVSVMISQIKEIIRSVLGLVINSANFWNSVVSAITNTFTNLEPQVDENWIVWRNLSATQTSYFYKILFSIQNEDTGRFMAILPIAFEITVDVQKQQLLFITIKDSARYEVKMKALTVVQALDSYNAPIIDVFNVRNYSLHRPNHNILQNLNVNPIKS.

Belongs to the cyt1/cyt2 endotoxin family. In terms of processing, active after proteolytic processing.

Functionally, kills the larvae of dipteran insects by making pores in the epithelial cell membrane of the insect midgut. The protein is Type-2Ba cytolytic delta-endotoxin (cyt2Ba1) of Bacillus thuringiensis subsp. israelensis.